The sequence spans 626 residues: Ankyrin repeat domain-containing protein 55 (626 aa).

9 ANK repeats span residues 25–54 (VDLAMVYQAASNGDVNSLTSVIREDPSILE), 59–88 (EGCTPLMHAVSGRQVDTVKLLLKMGANINT), 92–124 (YGRTSLCLATYLGWLEGCVSLLRNGAKHNIPDK), 125–156 (NGRLPLHAATAEPDVRLLIVLLQQSSLSEINH), 160–189 (EGMTPLHWAAFHNRPQHTQMLLKKGADPTL), 193–222 (DFKTALHWAVQSGNRILCSIILSHRQGPSI), 229–259 (SGKTCVHIAAASGFGDIINDLAKVPECNLQA), 263–292 (DDRTPLHWAAASGKAECVQSLLDLGMDSNL), and 296–325 (NESTPLAYALYCGHTACVRLLSREGRAEPA). Residues 354–372 (KEEQKAHQKDQSRARPKEE) show a composition bias toward basic and acidic residues. 3 disordered regions span residues 354–377 (KEEQKAHQKDQSRARPKEEETSEV), 455–491 (HAGLNAGPQHTAQRSQKSRSEQDLLNNRTGCPVSLEN), and 522–626 (QPGH…HDEN). A Phosphoserine modification is found at Ser-474. The span at 604-614 (QRGHDPPRAEE) shows a compositional bias: basic and acidic residues. Polar residues predominate over residues 616 to 626 (GGSSSPTHDEN).

The polypeptide is Ankyrin repeat domain-containing protein 55 (Ankrd55) (Mus musculus (Mouse)).